A 208-amino-acid polypeptide reads, in one-letter code: V-type ATP synthase subunit D (208 aa).

Belongs to the V-ATPase D subunit family.

In terms of biological role, produces ATP from ADP in the presence of a proton gradient across the membrane. The protein is V-type ATP synthase subunit D of Streptococcus pyogenes serotype M1.